Consider the following 691-residue polypeptide: Penicillin-binding protein 2D (691 aa).

The Cytoplasmic segment spans residues 1-19; it reads MDAMTNKRLRLTLKTVRAF. A helical; Signal-anchor for type II membrane protein membrane pass occupies residues 20–40; sequence IFLGAFAALAAAAVFMTVILI. Topologically, residues 41–691 are extracellular; it reads AKYQGAPSVQ…WWDKWLGRHH (651 aa). Positions 55–223 are transglycosylase; the sequence is TILYASDGSK…PSGYSPYVNE (169 aa). The Proton donor; for transglycosylase activity role is filled by Glu-94. A transpeptidase region spans residues 327-605; the sequence is VGFSAIDPRT…AKTIWADFME (279 aa). Catalysis depends on Ser-365, which acts as the Acyl-ester intermediate; for transpeptidase activity. Residues 663 to 691 are disordered; the sequence is AKQTKDRLPSKEKPASEKKWWDKWLGRHH. Basic and acidic residues predominate over residues 664–691; the sequence is KQTKDRLPSKEKPASEKKWWDKWLGRHH.

It in the N-terminal section; belongs to the glycosyltransferase 51 family. In the C-terminal section; belongs to the transpeptidase family.

The protein localises to the cell membrane. The catalysed reaction is [GlcNAc-(1-&gt;4)-Mur2Ac(oyl-L-Ala-gamma-D-Glu-L-Lys-D-Ala-D-Ala)](n)-di-trans,octa-cis-undecaprenyl diphosphate + beta-D-GlcNAc-(1-&gt;4)-Mur2Ac(oyl-L-Ala-gamma-D-Glu-L-Lys-D-Ala-D-Ala)-di-trans,octa-cis-undecaprenyl diphosphate = [GlcNAc-(1-&gt;4)-Mur2Ac(oyl-L-Ala-gamma-D-Glu-L-Lys-D-Ala-D-Ala)](n+1)-di-trans,octa-cis-undecaprenyl diphosphate + di-trans,octa-cis-undecaprenyl diphosphate + H(+). It carries out the reaction Preferential cleavage: (Ac)2-L-Lys-D-Ala-|-D-Ala. Also transpeptidation of peptidyl-alanyl moieties that are N-acyl substituents of D-alanine.. The protein operates within cell wall biogenesis; peptidoglycan biosynthesis. Functionally, involved in the polymerization and cross-linking of spore peptidoglycan. May be required for synthesis of the spore germ cell wall, the first layer of peptidoglycan synthesized on the surface of the inner forespore membrane. The sequence is that of Penicillin-binding protein 2D (pbpG) from Bacillus subtilis (strain 168).